The following is a 570-amino-acid chain: Periplasmic trehalase (570 aa).

Positions 1-34 are cleaved as a signal peptide; that stretch reads MITPALRHSGTLSFAIKLTVASTLLTFASLSAHA. Substrate is bound by residues R157, 164-165, N201, 210-212, 282-284, and G315; these read WD, RSQ, and RPE. Residues D317 and E501 each act as proton donor/acceptor in the active site. E516 lines the substrate pocket. The interval 542-570 is disordered; it reads KPCDSVPATRPAAPGASQPAPQKQVETTP. Over residues 552–570 the composition is skewed to low complexity; sequence PAAPGASQPAPQKQVETTP.

It belongs to the glycosyl hydrolase 37 family. As to quaternary structure, monomer.

The protein resides in the periplasm. The enzyme catalyses alpha,alpha-trehalose + H2O = alpha-D-glucose + beta-D-glucose. Its function is as follows. Provides the cells with the ability to utilize trehalose at high osmolarity by splitting it into glucose molecules that can subsequently be taken up by the phosphotransferase-mediated uptake system. The chain is Periplasmic trehalase from Citrobacter koseri (strain ATCC BAA-895 / CDC 4225-83 / SGSC4696).